We begin with the raw amino-acid sequence, 61 residues long: Small ribosomal subunit protein uS14B (61 aa).

The Zn(2+) site is built by C24, C27, C40, and C43.

Belongs to the universal ribosomal protein uS14 family. Zinc-binding uS14 subfamily. In terms of assembly, part of the 30S ribosomal subunit. Contacts proteins S3 and S10. Zn(2+) serves as cofactor.

Functionally, binds 16S rRNA, required for the assembly of 30S particles and may also be responsible for determining the conformation of the 16S rRNA at the A site. The chain is Small ribosomal subunit protein uS14B from Levilactobacillus brevis (strain ATCC 367 / BCRC 12310 / CIP 105137 / JCM 1170 / LMG 11437 / NCIMB 947 / NCTC 947) (Lactobacillus brevis).